Consider the following 1174-residue polypeptide: Fanconi anemia group J protein homolog (1174 aa).

Residues 11–445 form the Helicase ATP-binding domain; that stretch reads GGVKIHFPCR…KSHEPLRDVC (435 aa). The span at 101 to 126 shows a compositional bias: polar residues; that stretch reads NLDTSPHFNSPSKPSSGRNGVSTPCQ. Disordered stretches follow at residues 101-160 and 187-208; these read NLDT…EKKR and LASEKRVKPESPIGKSFSDRKD. Positions 134 to 143 are enriched in low complexity; sequence LAAKLSAKKQ. Residues 158–175 carry the Nuclear localization signal motif; it reads KKRIRPLETTQQIRKRHC. 185–192 is a binding site for ATP; that stretch reads ARLASEKR. Residues Cys286, Cys301, Cys313, and Cys353 each coordinate [4Fe-4S] cluster. The short motif at 393–396 is the DEAH box element; the sequence is VILD. The interaction with BRCA1 stretch occupies residues 888–1063; that stretch reads SRRHQKVTNR…SNETADTSLG (176 aa). Composition is skewed to polar residues over residues 923-935 and 990-1001; these read TSVSESSHQSPEN and SRSSSPTFGKQT. 2 disordered regions span residues 923–1001 and 1102–1155; these read TSVS…GKQT and LSPG…SSHS. Ser929, Ser932, and Ser994 each carry phosphoserine. Acidic residues predominate over residues 1138–1147; it reads DTNEENGELV. N6-acetyllysine is present on Lys1174.

It belongs to the DEAD box helicase family. DEAH subfamily. Binds directly to the BRCT domains of BRCA1. Interacts with the CIA complex components CIAO1, CIAO2B and MMS19. Requires [4Fe-4S] cluster as cofactor. Phosphorylated. Phosphorylation is necessary for interaction with BRCA1, and is cell-cycle regulated.

The protein resides in the nucleus. It localises to the cytoplasm. It carries out the reaction Couples ATP hydrolysis with the unwinding of duplex DNA at the replication fork by translocating in the 5'-3' direction. This creates two antiparallel DNA single strands (ssDNA). The leading ssDNA polymer is the template for DNA polymerase III holoenzyme which synthesizes a continuous strand.. It catalyses the reaction ATP + H2O = ADP + phosphate + H(+). Functionally, DNA-dependent helicase and 5' to 3' DNA helicase required for the maintenance of chromosomal stability. Acts late in the Fanconi anemia pathway, after FANCD2 ubiquitination. Involved in the repair of DNA double-strand breaks by homologous recombination in a manner that depends on its association with BRCA1. Involved in the repair of abasic sites at replication forks by promoting the degradation of DNA-protein cross-links: acts by catalyzing unfolding of HMCES DNA-protein cross-link via its helicase activity, exposing the underlying DNA and enabling cleavage of the DNA-protein adduct by the SPRTN metalloprotease. Can unwind RNA:DNA hybrids and G-quadruplex DNA. This chain is Fanconi anemia group J protein homolog, found in Mus musculus (Mouse).